Consider the following 311-residue polypeptide: tRNA (cytosine(49)-C(5))-methyltransferase (311 aa).

S-adenosyl-L-methionine is bound by residues 118-124 (AAAPGSK), Asp142, Asp169, and Asp186. Cys239 (nucleophile) is an active-site residue.

The protein belongs to the class I-like SAM-binding methyltransferase superfamily. RsmB/NOP family. In terms of assembly, forms a tripartite complex with archease and tRNA. Binds only the oligomeric forms of the archease.

It is found in the cytoplasm. It carries out the reaction cytidine(49) in tRNA precursor + S-adenosyl-L-methionine = 5-methylcytidine(49) in tRNA precursor + S-adenosyl-L-homocysteine + H(+). Its activity is regulated as follows. Substrate specificity and tendency to aggregate are influenced by archease. Functionally, catalyzes AdoMet-dependent formation of m5C in tRNA. In the presence of protein archease, specifically methylates the cytosine at position 49 (m5C49) of tRNA. In the absence of archease, catalyzes the formation of m5C at many locations in tRNAs or rRNAs. This Pyrococcus abyssi (strain GE5 / Orsay) protein is tRNA (cytosine(49)-C(5))-methyltransferase.